Consider the following 99-residue polypeptide: Integration host factor subunit alpha (99 aa).

It belongs to the bacterial histone-like protein family. As to quaternary structure, heterodimer of an alpha and a beta chain.

Functionally, this protein is one of the two subunits of integration host factor, a specific DNA-binding protein that functions in genetic recombination as well as in transcriptional and translational control. The sequence is that of Integration host factor subunit alpha from Pseudoalteromonas translucida (strain TAC 125).